Consider the following 1132-residue polypeptide: Eisosome protein SEG2 (1132 aa).

Residues 76–95 (KRTSSLPNQGHKNTSNNSAG) show a composition bias toward polar residues. 2 disordered regions span residues 76–142 (KRTS…GNSG) and 171–225 (RYSL…NDYH). The span at 101–113 (AHEDAETTFREFG) shows a compositional bias: basic and acidic residues. Positions 115 to 142 (KQSSKVLNISSSTGQNSKSRTTSLGNSG) are enriched in polar residues. Phosphoserine is present on serine 137. Residues 208 to 225 (GSQEKKSESGGKSKNDYH) show a composition bias toward basic and acidic residues. The residue at position 280 (serine 280) is a Phosphoserine. The interval 404–429 (PTLSEPKPAYVPPEDVEKEPSTLSNQ) is disordered. A phosphoserine mark is found at serine 504 and serine 507. 2 disordered regions span residues 510–938 (GGNQ…FRSM) and 961–993 (EKKE…THTT). Residue lysine 526 forms a Glycyl lysine isopeptide (Lys-Gly) (interchain with G-Cter in ubiquitin) linkage. Acidic residues-rich tracts occupy residues 550–561 (DQEEALSDNEPE) and 595–644 (KDDD…DDEY). Phosphoserine is present on serine 556. Composition is skewed to polar residues over residues 688 to 699 (SENAEVSQSGTN) and 710 to 735 (YLTN…TDTT). Lysine 743 participates in a covalent cross-link: Glycyl lysine isopeptide (Lys-Gly) (interchain with G-Cter in ubiquitin). Low complexity predominate over residues 761-773 (SSTSSSIYSIETS). 2 stretches are compositionally biased toward polar residues: residues 774–810 (PNID…SSHQ) and 827–845 (NRSC…TLSH). Residues 850-860 (PASDSSSSPPY) are compositionally biased toward low complexity. Residues 916–930 (PPARKSSFEKERPAK) are compositionally biased toward basic and acidic residues. Serine 980 and serine 1022 each carry phosphoserine.

The protein belongs to the SEG1 family. Component of eisosomes, large cytoplasmic protein assemblies that localize to specialized domains termed MCCs on the plasma membrane.

It localises to the cell membrane. Functionally, likely plays only a minor role in eisosome assembly. This is Eisosome protein SEG2 (SEG2) from Saccharomyces cerevisiae (strain ATCC 204508 / S288c) (Baker's yeast).